Here is a 317-residue protein sequence, read N- to C-terminus: Secreted frizzled-related protein 5 (317 aa).

A signal peptide spans 1 to 29 (MRAAAAGGGVRTAALALLLGALHWAPARC). In terms of domain architecture, FZ spans 48-165 (SKPPQCLDIP…PLDNDLCIAV (118 aa)). Disulfide bonds link Cys53–Cys116, Cys63–Cys109, Cys100–Cys135, Cys124–Cys162, Cys128–Cys152, Cys181–Cys253, Cys184–Cys255, and Cys198–Cys303. Residues 181 to 303 (CAQCEMEHSA…AVKFMFSYPC (123 aa)) form the NTR domain.

This sequence belongs to the secreted frizzled-related protein (sFRP) family. In terms of tissue distribution, highly expressed in the retinal pigment epithelium (RPE) and pancreas. Weak expression in heart, liver and muscle.

It localises to the secreted. Its function is as follows. Soluble frizzled-related proteins (sFRPS) function as modulators of Wnt signaling through direct interaction with Wnts. They have a role in regulating cell growth and differentiation in specific cell types. SFRP5 may be involved in determining the polarity of photoreceptor, and perhaps, other cells in the retina. The sequence is that of Secreted frizzled-related protein 5 (SFRP5) from Homo sapiens (Human).